The primary structure comprises 878 residues: Phosphoenolpyruvate carboxylase (878 aa).

Catalysis depends on residues H137 and K545.

The protein belongs to the PEPCase type 1 family. Mg(2+) is required as a cofactor.

It carries out the reaction oxaloacetate + phosphate = phosphoenolpyruvate + hydrogencarbonate. Its function is as follows. Forms oxaloacetate, a four-carbon dicarboxylic acid source for the tricarboxylic acid cycle. The protein is Phosphoenolpyruvate carboxylase of Serratia proteamaculans (strain 568).